A 142-amino-acid polypeptide reads, in one-letter code: Large ribosomal subunit protein uL11 (142 aa).

The protein belongs to the universal ribosomal protein uL11 family. As to quaternary structure, part of the ribosomal stalk of the 50S ribosomal subunit. Interacts with L10 and the large rRNA to form the base of the stalk. L10 forms an elongated spine to which L12 dimers bind in a sequential fashion forming a multimeric L10(L12)X complex. In terms of processing, one or more lysine residues are methylated.

Functionally, forms part of the ribosomal stalk which helps the ribosome interact with GTP-bound translation factors. This chain is Large ribosomal subunit protein uL11, found in Bradyrhizobium diazoefficiens (strain JCM 10833 / BCRC 13528 / IAM 13628 / NBRC 14792 / USDA 110).